Reading from the N-terminus, the 446-residue chain is AQWGLLHCSLHLVANILTMATSNPSGSSGSSAGLGFQGQSQQHSTVNSMQGKRKALKLNFANPAFKSTAKFTLNPTIQSTHVMHKLDAIRKLETSYQKQDLRTSGAKALSTNEQATKNRLERLRTHSIESSGKLKLSPEQHWDFTAEDLKDLGEIGRGAYGSVNKMSHTPSGQIMAVKRIRSTVDEKEQKQLLMDLDVVMRSSDCPYIVQFYGALFREGDCWICMELMATSFDKFYKYVYSFLDDVIPEEILGKITLATVKALNHLKENLKIIHRDIKPSNILLDTNGNIKLCDFGISGQLVDSIAKTRDAGCRPYMAPERIDPSASRQGYDVRSDVWSLGITLYELATGRFPYPKWNSVFDQLTQVVKGDPPQLSNSEEREFSPSFTSFVNQCLTKDESKRPKYKELLKHPFILMYEERTVDVAGYVGKILEQMPVSPSSPMYVD.

Residues 27–42 (SSGSSAGLGFQGQSQQ) show a composition bias toward low complexity. The interval 27-51 (SSGSSAGLGFQGQSQQHSTVNSMQG) is disordered. In terms of domain architecture, Protein kinase spans 149-414 (LKDLGEIGRG…YKELLKHPFI (266 aa)). ATP-binding positions include 155-163 (IGRGAYGSV) and lysine 178. Catalysis depends on aspartate 276, which acts as the Proton acceptor. Serine 304 bears the Phosphoserine; by RAF mark. Phosphothreonine; by RAF is present on threonine 308.

The protein belongs to the protein kinase superfamily. STE Ser/Thr protein kinase family. MAP kinase kinase subfamily. MAPKK is itself dependent on Ser/Thr phosphorylation for activity catalyzed by MAP kinase kinase kinases. As to expression, expressed abundantly in the adult brain and muscle.

It catalyses the reaction L-seryl-[protein] + ATP = O-phospho-L-seryl-[protein] + ADP + H(+). The enzyme catalyses L-threonyl-[protein] + ATP = O-phospho-L-threonyl-[protein] + ADP + H(+). The catalysed reaction is L-tyrosyl-[protein] + ATP = O-phospho-L-tyrosyl-[protein] + ADP + H(+). In terms of biological role, catalyzes the concomitant phosphorylation of a threonine and a tyrosine residue in a Thr-Glu-Tyr sequence located in MAP kinases. The chain is Dual specificity mitogen-activated protein kinase kinase 2 (map2k2) from Xenopus laevis (African clawed frog).